The chain runs to 397 residues: ATP-dependent RNA helicase eIF4A (397 aa).

The Q motif signature appears at 23–51; sequence YTFDDLNLKPNIVRGIFGYGYESPSAIQQ. One can recognise a Helicase ATP-binding domain in the interval 54 to 224; sequence ILPITEGRDV…TKFMNNPVRI (171 aa). ATP is bound at residue 67 to 74; the sequence is AQSGTGKT. The short motif at 172–175 is the DEAD box element; that stretch reads DEAD. The region spanning 235 to 396 is the Helicase C-terminal domain; that stretch reads GIKQFYINVE…EMPADIGALF (162 aa).

Belongs to the DEAD box helicase family. eIF4A subfamily. In terms of assembly, component of the eIF4F complex, which composition varies with external and internal environmental conditions. It is composed of at least eIF4A, eIF4E and eIF4G.

Its subcellular location is the cytoplasm. It catalyses the reaction ATP + H2O = ADP + phosphate + H(+). Its function is as follows. ATP-dependent RNA helicase which is a subunit of the eIF4F complex involved in cap recognition and is required for mRNA binding to ribosome. In the current model of translation initiation, eIF4A unwinds RNA secondary structures in the 5'-UTR of mRNAs which is necessary to allow efficient binding of the small ribosomal subunit, and subsequent scanning for the initiator codon. The sequence is that of ATP-dependent RNA helicase eIF4A (TIF1) from Debaryomyces hansenii (strain ATCC 36239 / CBS 767 / BCRC 21394 / JCM 1990 / NBRC 0083 / IGC 2968) (Yeast).